The following is a 1289-amino-acid chain: uncharacterized protein (1289 aa).

In terms of domain architecture, MHD1 spans 615-733; that stretch reads LDMYDVLKEL…DGMLSYSAQL (119 aa). Residues 745 to 774 are disordered; it reads DEPSYSLESSDTRSSLSLNNANVNHEKSRS. Low complexity predominate over residues 748 to 762; the sequence is SYSLESSDTRSSLSL. The C2 domain maps to 834-966; the sequence is AQYHSSHNLE…DDGFPIDFSL (133 aa). In terms of domain architecture, MHD2 spans 1044–1184; the sequence is YDAILPLFDY…KSVSELKDEV (141 aa).

Its subcellular location is the cytoplasm. This is an uncharacterized protein from Saccharomyces cerevisiae (strain ATCC 204508 / S288c) (Baker's yeast).